We begin with the raw amino-acid sequence, 179 residues long: Large ribosomal subunit protein uL5 (179 aa).

Belongs to the universal ribosomal protein uL5 family. Part of the 50S ribosomal subunit; part of the 5S rRNA/L5/L18/L25 subcomplex. Contacts the 5S rRNA and the P site tRNA. Forms a bridge to the 30S subunit in the 70S ribosome.

Its function is as follows. This is one of the proteins that bind and probably mediate the attachment of the 5S RNA into the large ribosomal subunit, where it forms part of the central protuberance. In the 70S ribosome it contacts protein S13 of the 30S subunit (bridge B1b), connecting the 2 subunits; this bridge is implicated in subunit movement. Contacts the P site tRNA; the 5S rRNA and some of its associated proteins might help stabilize positioning of ribosome-bound tRNAs. In Citrobacter koseri (strain ATCC BAA-895 / CDC 4225-83 / SGSC4696), this protein is Large ribosomal subunit protein uL5.